A 472-amino-acid chain; its full sequence is Succinate-semialdehyde dehydrogenase [NADP(+)] (472 aa).

NADP(+)-binding positions include 134-135, 158-161, and 210-211; these read WN, KHAS, and GS. Catalysis depends on Glu232, which acts as the Proton acceptor. Leu233 is a binding site for NADP(+). Cys266 (nucleophile) is an active-site residue. Glu363 serves as a coordination point for NADP(+).

Belongs to the aldehyde dehydrogenase family.

It catalyses the reaction succinate semialdehyde + NADP(+) + H2O = succinate + NADPH + 2 H(+). In terms of biological role, catalyzes the NADP(+)-dependent oxidation of succinate semialdehyde to succinate. It is believed to be the main source of succinate semialdehyde dehydrogenase activity in Mycobacterium. The protein is Succinate-semialdehyde dehydrogenase [NADP(+)] (gabD1) of Mycolicibacterium paratuberculosis (strain ATCC BAA-968 / K-10) (Mycobacterium paratuberculosis).